Reading from the N-terminus, the 142-residue chain is Succinate dehydrogenase assembly factor 2, mitochondrial (142 aa).

This sequence belongs to the SDHAF2 family. Interacts with the flavoprotein subunit within the SDH catalytic dimer.

It localises to the mitochondrion matrix. In terms of biological role, plays an essential role in the assembly of succinate dehydrogenase (SDH), an enzyme complex (also referred to as respiratory complex II) that is a component of both the tricarboxylic acid (TCA) cycle and the mitochondrial electron transport chain, and which couples the oxidation of succinate to fumarate with the reduction of ubiquinone (coenzyme Q) to ubiquinol. Required for flavinylation (covalent attachment of FAD) of the flavoprotein subunit of the SDH catalytic dimer. The polypeptide is Succinate dehydrogenase assembly factor 2, mitochondrial (Debaryomyces hansenii (strain ATCC 36239 / CBS 767 / BCRC 21394 / JCM 1990 / NBRC 0083 / IGC 2968) (Yeast)).